The following is a 703-amino-acid chain: Protein teflon (703 aa).

The C2H2-type 1 zinc-finger motif lies at 32-55; it reads MLCHFCKDIFTHLPEFMRHLQWSH. Disordered regions lie at residues 78 to 111, 140 to 161, 205 to 239, and 339 to 434; these read SSED…PGSS, EQSY…ARKP, NDVS…MPSL, and SQQP…SKLE. Residues 84–94 show a composition bias toward polar residues; sequence QSQANSCSSGD. A compositionally biased stretch (basic and acidic residues) spans 148–161; the sequence is PDSRTEGFRCARKP. Polar residues-rich tracts occupy residues 339–352 and 364–373; these read SQQP…NNAV and SLTVISSSPI. 2 consecutive C2H2-type zinc fingers follow at residues 649-672 and 677-700; these read YFCE…QSVH and FTCS…KTVH.

The protein belongs to the Teflon family.

Its subcellular location is the nucleus. The protein resides in the chromosome. Functionally, specifically required in males for proper segregation of autosomal bivalents at meiosis I. Expression is required in the male germ line prior to spermatocyte stage S4. May have a role as a bridging molecule maintaining adhesion to hold autosome bivalents together via heterochromatic connections. This Drosophila persimilis (Fruit fly) protein is Protein teflon.